A 940-amino-acid chain; its full sequence is Inter-alpha-trypsin inhibitor heavy chain H5 (940 aa).

A signal peptide spans 1 to 16 (MLPLLGLCFALPLCAG). The region spanning 35–161 (IPRQVRLLQR…KAAFLLSYEE (127 aa)) is the VIT domain. N-linked (GlcNAc...) asparagine glycosylation is found at Asn-97 and Asn-127. The disordered stretch occupies residues 207–227 (NSRQRGSGRGPDDSGPPPSTV). 6 N-linked (GlcNAc...) asparagine glycosylation sites follow: Asn-231, Asn-421, Asn-508, Asn-694, Asn-778, and Asn-795. A VWFA domain is found at 295 to 478 (NVVFVLDSSA…AQLIGFYDEI (184 aa)).

It belongs to the ITIH family.

It is found in the secreted. In terms of biological role, may act as a tumor suppressor. This chain is Inter-alpha-trypsin inhibitor heavy chain H5 (ITIH5), found in Bos taurus (Bovine).